A 264-amino-acid polypeptide reads, in one-letter code: MTVSSAPYCLAGQVALVTGSGRGIGAAIAVELGRLGASVVVNYANSSAAAEKVVAEIQSLGSAAIAIQADVREVSQTVRLMDEAVAHFGGLDIVCSNAGVVSFGHLGEVTEEEFDRVFSLNTRGQFFVAREAYRHLNEGGRIILMSSNTAHDFSVPKHSLYSGSKGAIDSFVRVFAKDCGDKKITVNAVAPGGTVTDMFHAVSHHYIPNGEKYTAEERQQMAAHASPLMRNGFPLDIARVVCFLASKEGEWVNGKSLTVDGGAA.

NADP(+) is bound by residues Ile-24, Asp-70, Asn-97, and Arg-130. Residues Ser-146, Ser-147, and Tyr-161 each act as proton donor in the active site. Tyr-161, Lys-165, and Thr-196 together coordinate NADP(+). The active-site Lowers pKa of active site Tyr is Lys-165.

The protein belongs to the short-chain dehydrogenases/reductases (SDR) family.

The enzyme catalyses 3,8,9,10-tetrahydroxy-6-methyl-1,4-dihydroanthracen-1-one + NADPH + H(+) = (3R)-3,8,9,10-tetrahydroxy-6-methyl-1,2,3,4-tetrahydroanthracen-1-one + NADP(+). Its pathway is secondary metabolite biosynthesis. Its function is as follows. Atrochrysone carboxylic acid synthase; part of the gene cluster that mediates the biosynthesis of the tetrahydroxanthone dimer secalonic acid D. The pathway begins with the synthesis of atrochrysone thioester by the polyketide synthase AacuL. The atrochrysone carboxyl ACP thioesterase AacuM then breaks the thioester bond and releases the atrochrysone carboxylic acid from AacuL. Atrochrysone carboxylic acid is decarboxylated by the decarboxylase AacuI, and oxidized by the anthrone oxygenase AacuG to yield emodin. Emodin is then reduced to emodin hydroquinone by a yet unidentified oxidoreductase. A-ring reduction by the short chain dehydrogenase AacuN, dehydration by the scytalone dehydratase-like protein AacuK and probable spontaneous re-oxidation, results in overall deoxygenation to chrysophanol. Baeyer-Villiger oxidation by the Baeyer-Villiger monooxygenase (BVMO) AacuH then yields monodictyphenone. Monodictyphenone is transformed into compounds with the tetrahydroxanthone skeleton via methylesterification by the methyltransferase AacuQ, followed by the action of the flavin-dependent monooxygenase AacuC, the isomerase AacuP, and the short chain dehydrogenase/reductase AacuF or AacuD. AacuF and AacuD should accept the same compound as a substrate but perform the ketoreduction with a different stereoselectivity, thus yielding blennolides B and A, respectively. In the final step of the biosynthesis, the cytochrome P450 monooxygenase AacuE accepts blennolide B and/or blennolide A to conduct the dimerization reaction to furnish the tetrahydroxanthone dimers, secalonic acids D, B, and F. The sequence is that of Short chain dehydrogenase/reductase AacuN from Aspergillus aculeatus (strain ATCC 16872 / CBS 172.66 / WB 5094).